Here is a 571-residue protein sequence, read N- to C-terminus: Septation ring formation regulator EzrA (571 aa).

The Extracellular portion of the chain corresponds to 1–3 (MYY). The helical transmembrane segment at 4 to 22 (MLIGFIIVVIAVIGAGYIL) threads the bilayer. Over 23–571 (KRKHYQRINE…ASKVSVDDIE (549 aa)) the chain is Cytoplasmic. Coiled-coil stretches lie at residues 102-147 (ATNA…TKEK), 248-298 (LAQM…DTLE), 326-374 (DALA…ASGE), 400-437 (KFAE…ERER), and 478-529 (RIAE…ENHF).

This sequence belongs to the EzrA family.

It localises to the cell membrane. Negative regulator of FtsZ ring formation; modulates the frequency and position of FtsZ ring formation. Inhibits FtsZ ring formation at polar sites. Interacts either with FtsZ or with one of its binding partners to promote depolymerization. The protein is Septation ring formation regulator EzrA of Listeria monocytogenes serotype 4a (strain HCC23).